Here is a 603-residue protein sequence, read N- to C-terminus: UvrABC system protein C (603 aa).

Residues 15 to 92 (DQPGCYLMKD…IKKHDPRFNI (78 aa)) enclose the GIY-YIG domain. One can recognise a UVR domain in the interval 197 to 232 (KTVKNDLMKKMQEAAENMEFEKAGEFRDQINAIETT).

The protein belongs to the UvrC family. As to quaternary structure, interacts with UvrB in an incision complex.

The protein localises to the cytoplasm. In terms of biological role, the UvrABC repair system catalyzes the recognition and processing of DNA lesions. UvrC both incises the 5' and 3' sides of the lesion. The N-terminal half is responsible for the 3' incision and the C-terminal half is responsible for the 5' incision. This is UvrABC system protein C from Listeria monocytogenes serotype 4a (strain HCC23).